Here is a 207-residue protein sequence, read N- to C-terminus: Large ribosomal subunit protein uL4 (207 aa).

Residues 49-78 (HAVKNRSAVRGGGKKPWRQKGTGRARQGSI) are disordered. A compositionally biased stretch (basic residues) spans 60–71 (GGKKPWRQKGTG).

The protein belongs to the universal ribosomal protein uL4 family. As to quaternary structure, part of the 50S ribosomal subunit.

One of the primary rRNA binding proteins, this protein initially binds near the 5'-end of the 23S rRNA. It is important during the early stages of 50S assembly. It makes multiple contacts with different domains of the 23S rRNA in the assembled 50S subunit and ribosome. Functionally, forms part of the polypeptide exit tunnel. In Ligilactobacillus salivarius (strain UCC118) (Lactobacillus salivarius), this protein is Large ribosomal subunit protein uL4.